The chain runs to 31 residues: Zinc metalloproteinase alsophinase (31 aa).

Glutamine 1 is subject to Pyrrolidone carboxylic acid. A Peptidase M12B domain is found at 9-31 (KYIEFYLVVDNGMFXKYSXXFTV). Residue glutamate 12 participates in Ca(2+) binding.

As to quaternary structure, monomer. The cofactor is Zn(2+). In terms of processing, contains 9 disulfide bonds. In terms of tissue distribution, expressed by the venom gland.

It is found in the secreted. Inhibited by 1,10-phenanthroline. Its function is as follows. Snake venom zinc metalloprotease that has potent hemorrhagic activity, fibrinogenolytic activity on the alpha-subunit of human fibrinogen (FGA) in vitro and provokes necrosis in skin, muscle and lung tissues. May contribute to local edema and ecchymosis induced by venom. Hydrolyzes model substrate (beta-chain of insulin) at Ala(14)-Leu(15). This is Zinc metalloproteinase alsophinase from Borikenophis portoricensis (Puerto Rican racer).